A 443-amino-acid chain; its full sequence is Xaa-Pro dipeptidase (443 aa).

Residues D246, D257, H339, E384, and E423 each contribute to the Mn(2+) site.

The protein belongs to the peptidase M24B family. Bacterial-type prolidase subfamily. It depends on Mn(2+) as a cofactor.

It catalyses the reaction Xaa-L-Pro dipeptide + H2O = an L-alpha-amino acid + L-proline. Splits dipeptides with a prolyl residue in the C-terminal position. The polypeptide is Xaa-Pro dipeptidase (Shigella flexneri serotype 5b (strain 8401)).